We begin with the raw amino-acid sequence, 317 residues long: Pectinesterase 31 (317 aa).

Thr91 and Gln121 together coordinate substrate. The Proton donor role is filled by Asp144. Asp165 functions as the Nucleophile in the catalytic mechanism. 2 residues coordinate substrate: Arg222 and Trp224.

It belongs to the pectinesterase family. In terms of tissue distribution, expressed in siliques.

The catalysed reaction is [(1-&gt;4)-alpha-D-galacturonosyl methyl ester](n) + n H2O = [(1-&gt;4)-alpha-D-galacturonosyl](n) + n methanol + n H(+). It functions in the pathway glycan metabolism; pectin degradation; 2-dehydro-3-deoxy-D-gluconate from pectin: step 1/5. With respect to regulation, does not require salt for activity. Not inhibited by kiwi pectin methylesterase inhibitor (PMEI). In terms of biological role, acts in the modification of cell walls via demethylesterification of cell wall pectin. Acts in a blockwise manner, resulting in a cell wall rigidification. The chain is Pectinesterase 31 (PME31) from Arabidopsis thaliana (Mouse-ear cress).